The primary structure comprises 216 residues: MADFNQLFDQWANTYDNTVFSTDNEYTQVFERYETTLQSICDAIQDKKQGLTLEIGVGTGNLTKHLEQQGFQVIGIEPSKQMRRIAKDKLPHIEIVDGHFLSIPVAKTFDSIVTSYAFHHLNLEEKHQALTYLDSFLNQSGKIVIADTMFESEEYKRELLNKVEKDRAYNLLEDLKAEYYEYINDITDIFLNLGYSFTISKMNKYVWIICATKGGL.

S-adenosyl-L-methionine contacts are provided by G56 and E77.

This sequence belongs to the methyltransferase superfamily. YrrT family.

Functionally, could be a S-adenosyl-L-methionine-dependent methyltransferase. This is an uncharacterized protein from Alkaliphilus oremlandii (strain OhILAs) (Clostridium oremlandii (strain OhILAs)).